We begin with the raw amino-acid sequence, 332 residues long: Solute carrier family 25 member 16 (332 aa).

3 Solcar repeats span residues 34–120 (FYWL…YKTF), 128–216 (SGHV…LKSV), and 238–328 (LKTH…MKQF). The next 6 membrane-spanning stretches (helical) occupy residues 37–57 (LRSFLAGGIAGCCAKTTVAPL), 88–108 (GYLGLYKGNGAMMIRIFPYGA), 134–154 (LMAGSMAGMTAVICTYPLDVV), 191–211 (GLMPTILGMAPYAGVSFFTFG), 244–264 (LLCGGVAGAIAQTISYPFDVT), and 299–319 (GLYRGLSLNYIRCIPSQAVAF).

This sequence belongs to the mitochondrial carrier (TC 2.A.29) family.

The protein resides in the mitochondrion inner membrane. In terms of biological role, may be involved in the transport of coenzyme A in the mitochondrial matrix. Very little is known about the physiological function of this carrier. The sequence is that of Solute carrier family 25 member 16 from Mus musculus (Mouse).